Here is a 241-residue protein sequence, read N- to C-terminus: Histone H1-II (241 aa).

Over residues 1–10 (MASDAPEVKA) the composition is skewed to basic and acidic residues. 2 disordered regions span residues 1–27 (MASDAPEVKAPKAKTQKKPKTAPTHPP) and 89–241 (NSYK…AKKA). The segment covering 11 to 20 (PKAKTQKKPK) has biased composition (basic residues). Residues 24 to 95 (THPPYIQMVT…KVKNSYKLSD (72 aa)) enclose the H15 domain. Over residues 99 to 111 (SKAKAAAKPKAAP) the composition is skewed to basic residues. Repeat copies occupy residues 111–116 (PKKAAA), 117–122 (PKKAAA), and 123–128 (PKKAKA). The 8 X 6 AA repeats of P-K-K-A-[AK]-A stretch occupies residues 111–217 (PKKAAAPKKA…KAATPKKAKA (107 aa)). Basic and acidic residues predominate over residues 129–155 (PKKEGEKKAVKPKSEKKAAKPKTEKKP). 2 stretches are compositionally biased toward basic residues: residues 156 to 184 (KAAKKPKAAKKPAAKKPAAKKPAAKKATP) and 194 to 241 (AAPK…AKKA). Residues 183–186 (TPKK) mediate DNA binding. 5 consecutive repeat copies span residues 184-189 (PKKAAA), 190-195 (PKKAAA), 196-201 (PKKAKA), 204-209 (PKKAKA), and 212-217 (PKKAKA). 2 DNA-binding regions span residues 203–206 (TPKK) and 211–214 (TPKK).

Belongs to the histone H1/H5 family.

The protein localises to the nucleus. Its subcellular location is the chromosome. In terms of biological role, histones H1 are necessary for the condensation of nucleosome chains into higher-order structures. In Volvox carteri (Green alga), this protein is Histone H1-II (H1-II).